A 277-amino-acid chain; its full sequence is MKKAPAGSFPAKPTIAPERPILVFDSGIGGLTVLREARVVMPDRRFVYIADDAGFPYGNWEEEALKRRIIELFGEFIANYDPEIAVIACNTASTLVLEDLRRAYPSVPFVGTVPAIKPAAERTSSGLVSVLATPGTVKRAYTRDLIQSFASRCHVRLVGVDGLAAIAEAHIRGESFDEALVMAQIAPCFIEKGGKRTDIVVLACTHYPFLVNVLRRLAPWPVDWLDPAEAIARRMKSLLPARSDDDEFHSQDDLAFFTSRKPDYAIRRLMQGFGLRF.

Substrate-binding positions include 25–26 and 57–58; these read DS and YG. Cysteine 89 functions as the Proton donor/acceptor in the catalytic mechanism. Residue 90–91 coordinates substrate; it reads NT. Catalysis depends on cysteine 204, which acts as the Proton donor/acceptor. 205–206 contacts substrate; it reads TH.

The protein belongs to the aspartate/glutamate racemases family.

The catalysed reaction is L-glutamate = D-glutamate. It functions in the pathway cell wall biogenesis; peptidoglycan biosynthesis. Provides the (R)-glutamate required for cell wall biosynthesis. This chain is Glutamate racemase, found in Brucella ovis (strain ATCC 25840 / 63/290 / NCTC 10512).